A 1146-amino-acid polypeptide reads, in one-letter code: Probable transport protein MmpL12 (1146 aa).

11 helical membrane-spanning segments follow: residues Leu25–Leu45, Val206–Leu226, Ala254–Ile274, Ile298–Phe318, Ala330–Leu350, Thr382–Ile402, Phe826–Leu846, Ile850–Val870, Leu883–Ile903, Val928–Ile948, and Asn949–Val969.

It belongs to the resistance-nodulation-cell division (RND) (TC 2.A.6) family. MmpL subfamily.

Its subcellular location is the cell membrane. The polypeptide is Probable transport protein MmpL12 (mmpL12) (Mycobacterium tuberculosis (strain CDC 1551 / Oshkosh)).